Reading from the N-terminus, the 676-residue chain is Protein TAPT1 homolog (676 aa).

A disordered region spans residues M1–Q44. Positions R24–Q38 are enriched in basic and acidic residues. Helical transmembrane passes span S128 to V148, E170 to V190, V249 to F269, F346 to V366, G414 to F434, and L437 to L457. Positions S625–L676 are disordered. The span at K633 to K647 shows a compositional bias: basic residues.

It belongs to the TAPT1 family.

It is found in the membrane. The sequence is that of Protein TAPT1 homolog from Drosophila melanogaster (Fruit fly).